The chain runs to 34 residues: Dermaseptin-H5 (34 aa).

Expressed by the skin glands.

It is found in the secreted. In terms of biological role, has antimicrobial activity. The chain is Dermaseptin-H5 from Pithecopus hypochondrialis (Orange-legged leaf frog).